A 379-amino-acid chain; its full sequence is Queuine tRNA-ribosyltransferase (379 aa).

Aspartate 94 functions as the Proton acceptor in the catalytic mechanism. Residues aspartate 94–phenylalanine 98, aspartate 148, glutamine 191, and glycine 218 contribute to the substrate site. The tract at residues glycine 249 to serine 255 is RNA binding. The active-site Nucleophile is aspartate 268. The interval threonine 273–arginine 277 is RNA binding; important for wobble base 34 recognition. 4 residues coordinate Zn(2+): cysteine 306, cysteine 308, cysteine 311, and histidine 337.

Belongs to the queuine tRNA-ribosyltransferase family. In terms of assembly, homodimer. Within each dimer, one monomer is responsible for RNA recognition and catalysis, while the other monomer binds to the replacement base PreQ1. Zn(2+) is required as a cofactor.

It catalyses the reaction 7-aminomethyl-7-carbaguanine + guanosine(34) in tRNA = 7-aminomethyl-7-carbaguanosine(34) in tRNA + guanine. Its pathway is tRNA modification; tRNA-queuosine biosynthesis. Catalyzes the base-exchange of a guanine (G) residue with the queuine precursor 7-aminomethyl-7-deazaguanine (PreQ1) at position 34 (anticodon wobble position) in tRNAs with GU(N) anticodons (tRNA-Asp, -Asn, -His and -Tyr). Catalysis occurs through a double-displacement mechanism. The nucleophile active site attacks the C1' of nucleotide 34 to detach the guanine base from the RNA, forming a covalent enzyme-RNA intermediate. The proton acceptor active site deprotonates the incoming PreQ1, allowing a nucleophilic attack on the C1' of the ribose to form the product. After dissociation, two additional enzymatic reactions on the tRNA convert PreQ1 to queuine (Q), resulting in the hypermodified nucleoside queuosine (7-(((4,5-cis-dihydroxy-2-cyclopenten-1-yl)amino)methyl)-7-deazaguanosine). This Listeria welshimeri serovar 6b (strain ATCC 35897 / DSM 20650 / CCUG 15529 / CIP 8149 / NCTC 11857 / SLCC 5334 / V8) protein is Queuine tRNA-ribosyltransferase.